A 719-amino-acid polypeptide reads, in one-letter code: Cyclin-dependent kinase 11.1 (719 aa).

Composition is skewed to basic and acidic residues over residues 1 to 20 (MSDH…ESHK), 38 to 48 (KGLESKMRESI), and 78 to 129 (KAKE…DQKV). 2 disordered regions span residues 1–215 (MSDH…KDDD) and 231–315 (EEKE…EMTE). The segment covering 130-140 (HEHRHHHHHRK) has biased composition (basic residues). Residues 141-163 (HETDGHRTNRSNRDRSSERDSEK) show a composition bias toward basic and acidic residues. Positions 164–174 (HKRHIDRHKKS) are enriched in basic residues. Basic and acidic residues-rich tracts occupy residues 191 to 215 (HTDV…KDDD) and 264 to 274 (DDTKPKSPGKA). Residues 275–285 (EDDDDVIEVLD) show a composition bias toward acidic residues. One can recognise a Protein kinase domain in the interval 356-647 (YECVNRVDEG…ATQALDHEWF (292 aa)). Residues 362-370 (VDEGTFGVV) and Lys385 contribute to the ATP site. Asp484 functions as the Proton acceptor in the catalytic mechanism. The interval 657-689 (EEFPTFPAKSEQNKAPPPAKQKQQENRISHVDP) is disordered. Over residues 678–689 (KQQENRISHVDP) the composition is skewed to basic and acidic residues.

It belongs to the protein kinase superfamily. CMGC Ser/Thr protein kinase family. CDC2/CDKX subfamily. As to expression, broadly expressed in somatic and germ line cells (at protein level). Not expressed in sperm (at protein level).

The protein resides in the nucleus. The enzyme catalyses L-seryl-[protein] + ATP = O-phospho-L-seryl-[protein] + ADP + H(+). The catalysed reaction is L-threonyl-[protein] + ATP = O-phospho-L-threonyl-[protein] + ADP + H(+). Functionally, probable cyclin-dependent kinase whose activity is most likely regulated by the cyclin cyl-1/Cylin-L. Important for normal oocyte and sperm development; probably required during multiple stages of gametogenesis. Plays a role in the activation of RAS-ERK signaling in the germ line. Also acts partially redundantly with cdk-11.2 to ensure embryonic viability. The polypeptide is Cyclin-dependent kinase 11.1 (Caenorhabditis elegans).